The sequence spans 321 residues: Cytochrome f (321 aa).

Positions 1–35 are cleaved as a signal peptide; it reads MQNRNKNNWMKKWVIRSISILIILNIIAWPSISYA. 4 residues coordinate heme: Y36, C56, C59, and H60. The helical transmembrane segment at 287–306 threads the bilayer; it reads IQGLLLFFVSVIMAQILLVL.

Belongs to the cytochrome f family. The 4 large subunits of the cytochrome b6-f complex are cytochrome b6, subunit IV (17 kDa polypeptide, petD), cytochrome f and the Rieske protein, while the 4 small subunits are PetG, PetL, PetM and PetN. The complex functions as a dimer. It depends on heme as a cofactor.

Its subcellular location is the plastid. It localises to the chloroplast thylakoid membrane. Functionally, component of the cytochrome b6-f complex, which mediates electron transfer between photosystem II (PSII) and photosystem I (PSI), cyclic electron flow around PSI, and state transitions. This chain is Cytochrome f, found in Psilotum nudum (Whisk fern).